The primary structure comprises 553 residues: PE cleavage protein A (553 aa).

The PE domain maps to 1-92 (MSLLVVAPEW…SAGSYSAAEA (92 aa)). Asp293 is a catalytic residue.

Belongs to the mycobacterial PE family. PGRS subfamily. In terms of processing, undergoes auto-proteolytic processing.

It is found in the secreted. It localises to the cell surface. Aspartic protease that processes the lipase LipY and other PE_PGRS proteins. Can also cleave itself. Cleaves LipY both inside the PE domain, before amino acid 98, and after amino acids 136 and 149. Involved in virulence. This is PE cleavage protein A from Mycobacterium marinum (strain ATCC BAA-535 / M).